A 376-amino-acid chain; its full sequence is N-acetyldiaminopimelate deacetylase (376 aa).

Asp69 is a catalytic residue. The active-site Proton acceptor is Glu128.

Belongs to the peptidase M20A family. N-acetyldiaminopimelate deacetylase subfamily.

The catalysed reaction is N-acetyl-(2S,6S)-2,6-diaminopimelate + H2O = (2S,6S)-2,6-diaminopimelate + acetate. Its pathway is amino-acid biosynthesis; L-lysine biosynthesis via DAP pathway; LL-2,6-diaminopimelate from (S)-tetrahydrodipicolinate (acetylase route): step 3/3. Catalyzes the conversion of N-acetyl-diaminopimelate to diaminopimelate and acetate. The protein is N-acetyldiaminopimelate deacetylase of Streptococcus pneumoniae (strain P1031).